We begin with the raw amino-acid sequence, 120 residues long: Chemokine vCXCL1 (120 aa).

Belongs to the intercrine alpha (chemokine CxC) family. In terms of assembly, interacts with host CXCR1 and CXCR2.

In terms of biological role, acts as a functional chemokine, inducing calcium mobilization, chemotaxis, and degranulation of neutrophils. Contributes to the induction of neutrophil chemotaxis by interacting with host CXCR1 and CXCR2 receptors. The chain is Chemokine vCXCL1 (UL146) from Human cytomegalovirus (strain Merlin) (HHV-5).